Consider the following 63-residue polypeptide: Toxin Cn11 (63 aa).

Residues 2 to 63 (RDGYPVDEKG…KVWTYETNTC (62 aa)) form the LCN-type CS-alpha/beta domain. 4 disulfides stabilise this stretch: C12/C63, C16/C37, C23/C44, and C27/C46.

It belongs to the long (4 C-C) scorpion toxin superfamily. Sodium channel inhibitor family. Expressed by the venom gland.

The protein localises to the secreted. Functionally, first blocker of sodium channels (Nav) found in scorpions. Is lethal to crustaceans (Cambarellus montezumae), less toxic to insects (crickets) and non-toxic to mammals (mice) at the doses assayed. The chain is Toxin Cn11 from Centruroides noxius (Mexican scorpion).